The chain runs to 371 residues: Peptide chain release factor 2 (371 aa).

Q247 is modified (N5-methylglutamine).

It belongs to the prokaryotic/mitochondrial release factor family. In terms of processing, methylated by PrmC. Methylation increases the termination efficiency of RF2.

The protein localises to the cytoplasm. In terms of biological role, peptide chain release factor 2 directs the termination of translation in response to the peptide chain termination codons UGA and UAA. This is Peptide chain release factor 2 from Caulobacter vibrioides (strain ATCC 19089 / CIP 103742 / CB 15) (Caulobacter crescentus).